Here is a 744-residue protein sequence, read N- to C-terminus: ATP-dependent zinc metalloprotease FtsH (744 aa).

Over 1-16 (MQDQNNSNTPKKKKLS) the chain is Cytoplasmic. Residues 17–37 (FWGIIGIVASILVLLVIAYII) traverse the membrane as a helical segment. Over 38–177 (YYYVSQTTVL…ESIWSTVLRY (140 aa)) the chain is Extracellular. A helical transmembrane segment spans residues 178–198 (GTNIIFLLLFAASFIFMFMSF). Topologically, residues 199–744 (RSQRGTGGLL…EEKSKDEKNN (546 aa)) are cytoplasmic. 264 to 271 (GPPGTGKT) contacts ATP. His486 lines the Zn(2+) pocket. Glu487 is a catalytic residue. Zn(2+) is bound by residues His490 and Asp564. A disordered region spans residues 722 to 744 (IEANKSSSKSTVNEEKSKDEKNN). The span at 733 to 744 (VNEEKSKDEKNN) shows a compositional bias: basic and acidic residues.

It in the central section; belongs to the AAA ATPase family. This sequence in the C-terminal section; belongs to the peptidase M41 family. In terms of assembly, homohexamer. Zn(2+) is required as a cofactor.

The protein resides in the cell membrane. Functionally, acts as a processive, ATP-dependent zinc metallopeptidase for both cytoplasmic and membrane proteins. Plays a role in the quality control of integral membrane proteins. This Metamycoplasma arthritidis (strain 158L3-1) (Mycoplasma arthritidis) protein is ATP-dependent zinc metalloprotease FtsH.